The sequence spans 458 residues: Estrogen-related receptor gamma (458 aa).

Lys40 is covalently cross-linked (Glycyl lysine isopeptide (Lys-Gly) (interchain with G-Cter in SUMO)). Polar residues predominate over residues 42–52 (EPSSPASLTDS). Residues 42–85 (EPSSPASLTDSVNHHSPGGSSDASGSYSSTMNGHQNGLDSPPLY) are disordered. Ser45 is modified (phosphoserine). A compositionally biased stretch (low complexity) spans 57-70 (SPGGSSDASGSYSS). Positions 125 to 200 (KRLCLVCGDI…VGMLKEGVRL (76 aa)) form a DNA-binding region, nuclear receptor. 2 NR C4-type zinc fingers span residues 128–148 (CLVCGDIASGYHYGVASCEAC) and 164–188 (CPATNECEITKRRRKSCQACRFMKC). The 225-residue stretch at 233 to 457 (PYNKIVSHLL…KLFLEMLEAK (225 aa)) folds into the NR LBD domain.

It belongs to the nuclear hormone receptor family. NR3 subfamily. In terms of assembly, homodimer. Binds TLE1, PNRC1 and PNRC2. Binds GRIP1. Interacts with NRIP1, NCOA1 and NCOR2. In terms of processing, acetylated by PCAF/KAT2 (in vitro). Post-translationally, sumoylation on Lys-40 is enhanced by phosphorylation at Ser-45 and represses transcriptional activity. Phosphorylation on Ser-45 enhances sumoylation on Lys-40 thus repressing transcriptional activity. In terms of tissue distribution, expressed in the heart, kidney, brain, lung, bone marrow, adrenal gland, trachea, spinal cord and thyroid gland.

It localises to the nucleus. Functionally, orphan receptor that acts as a transcription activator in the absence of bound ligand. Binds specifically to an estrogen response element and activates reporter genes controlled by estrogen response elements. Induces the expression of PERM1 in the skeletal muscle. The chain is Estrogen-related receptor gamma (ESRRG) from Homo sapiens (Human).